A 224-amino-acid polypeptide reads, in one-letter code: Cytidylate kinase (224 aa).

11-19 (GPAAAGKST) contacts ATP.

It belongs to the cytidylate kinase family. Type 1 subfamily.

Its subcellular location is the cytoplasm. It carries out the reaction CMP + ATP = CDP + ADP. The enzyme catalyses dCMP + ATP = dCDP + ADP. The protein is Cytidylate kinase of Bacillus velezensis (strain DSM 23117 / BGSC 10A6 / LMG 26770 / FZB42) (Bacillus amyloliquefaciens subsp. plantarum).